The following is a 295-amino-acid chain: Glycine N-methyltransferase (295 aa).

Positions 4 and 6 each coordinate (6S)-5-methyl-5,6,7,8-tetrahydrofolate. S10 is modified (phosphoserine). Residues Y22, W31, Y34, and R41 each contribute to the S-adenosyl-L-methionine site. Y34 carries the phosphotyrosine modification. N6-succinyllysine is present on K46. Residues A65, 86 to 88 (DAS), 117 to 118 (NW), 139 to 142 (LGNS), and R178 each bind S-adenosyl-L-methionine. K193, K198, and K203 each carry N6-succinyllysine. Residue H217 participates in (6S)-5-methyl-5,6,7,8-tetrahydrofolate binding. Residue Y223 coordinates S-adenosyl-L-methionine. R242 contacts (6S)-5-methyl-5,6,7,8-tetrahydrofolate.

It belongs to the class I-like SAM-binding methyltransferase superfamily. Glycine N-methyltransferase family. Homotetramer. Abundant in liver.

It localises to the cytoplasm. It carries out the reaction glycine + S-adenosyl-L-methionine = sarcosine + S-adenosyl-L-homocysteine + H(+). With respect to regulation, inhibited by 5-methyltetrahydrofolate monoglutamate and by 5-methyltetrahydrofolate pentaglutamate, inhibition is much more effective by the pentaglutamate form than by the monoglutamate form. Two molecules of 5-methyltetrahydrofolate are bound per tetramer. The binding sites are localized between subunits. Inhibitor binding may preclude movements of the polypeptide chain that are necessary for enzyme activity. Catalyzes the methylation of glycine by using S-adenosylmethionine (AdoMet) to form N-methylglycine (sarcosine) with the concomitant production of S-adenosylhomocysteine (AdoHcy), a reaction regulated by the binding of 5-methyltetrahydrofolate. Plays an important role in the regulation of methyl group metabolism by regulating the ratio between S-adenosyl-L-methionine and S-adenosyl-L-homocysteine. This is Glycine N-methyltransferase (GNMT) from Oryctolagus cuniculus (Rabbit).